Reading from the N-terminus, the 113-residue chain is Small ribosomal subunit protein bS6 (113 aa).

The protein belongs to the bacterial ribosomal protein bS6 family.

Its function is as follows. Binds together with bS18 to 16S ribosomal RNA. This chain is Small ribosomal subunit protein bS6, found in Pseudoalteromonas translucida (strain TAC 125).